The following is a 433-amino-acid chain: E3 ubiquitin-protein ligase RNF26 (433 aa).

The next 5 helical transmembrane spans lie at 24 to 44 (LNFL…AFVY), 60 to 80 (GVLL…CGGL), 147 to 169 (VINS…VLAL), 183 to 203 (VVAA…ILLW), and 220 to 240 (LASF…VLAV). An RING-type zinc finger spans residues 380–422 (CVICQDQSKTVLLLPCRHLCLCQACTEILMRHPVYHRNCPLCR).

In terms of assembly, interacts with INCA1. Interacts with TMEM43, ENDOD1, TMEM33 and TMED1 to form a complex capable of modulating innate immune signaling through the cGAS-STING pathway. Interacts with UBE2J1; this interaction is important for SQSTM1 ubiquitination. As to expression, ubiquitous. Up-regulated in several cancer cell lines.

It is found in the endoplasmic reticulum membrane. The catalysed reaction is S-ubiquitinyl-[E2 ubiquitin-conjugating enzyme]-L-cysteine + [acceptor protein]-L-lysine = [E2 ubiquitin-conjugating enzyme]-L-cysteine + N(6)-ubiquitinyl-[acceptor protein]-L-lysine.. It functions in the pathway protein modification; protein ubiquitination. In terms of biological role, E3 ubiquitin-protein ligase that plays a key role in endosome organization by retaining vesicles in the perinuclear cloud. Acts as a platform for perinuclear positioning of the endosomal system by mediating ubiquitination of SQSTM1 through interaction with the ubiquitin conjugating enzyme UBE2J1. Ubiquitinated SQSTM1 attracts specific vesicle-associated adapters, forming a molecular bridge that restrains cognate vesicles in the perinuclear region and organizes the endosomal pathway for efficient cargo transport. Also acts as a regulator of type I interferon production in response to viral infection by mediating the formation of 'Lys-11'-linked polyubiquitin chains on TMEM173/STING, leading to stabilize TMEM173/STING. Also required to limit type I interferon response by promoting autophagic degradation of IRF3. The sequence is that of E3 ubiquitin-protein ligase RNF26 from Homo sapiens (Human).